A 200-amino-acid polypeptide reads, in one-letter code: Pyridoxine/pyridoxamine 5'-phosphate oxidase (200 aa).

FMN-binding positions include 48-53 (RMVLLK), 63-64 (YT), K70, and Q92. A substrate-binding site is contributed by K53. Positions 110, 114, and 118 each coordinate substrate. FMN contacts are provided by residues 127–128 (QS) and W171. Residue 177–179 (RLH) participates in substrate binding. Residue R181 participates in FMN binding.

Belongs to the pyridoxamine 5'-phosphate oxidase family. In terms of assembly, homodimer. The cofactor is FMN.

It carries out the reaction pyridoxamine 5'-phosphate + O2 + H2O = pyridoxal 5'-phosphate + H2O2 + NH4(+). It catalyses the reaction pyridoxine 5'-phosphate + O2 = pyridoxal 5'-phosphate + H2O2. Its pathway is cofactor metabolism; pyridoxal 5'-phosphate salvage; pyridoxal 5'-phosphate from pyridoxamine 5'-phosphate: step 1/1. It participates in cofactor metabolism; pyridoxal 5'-phosphate salvage; pyridoxal 5'-phosphate from pyridoxine 5'-phosphate: step 1/1. Functionally, catalyzes the oxidation of either pyridoxine 5'-phosphate (PNP) or pyridoxamine 5'-phosphate (PMP) into pyridoxal 5'-phosphate (PLP). This chain is Pyridoxine/pyridoxamine 5'-phosphate oxidase, found in Cereibacter sphaeroides (strain ATCC 17029 / ATH 2.4.9) (Rhodobacter sphaeroides).